Consider the following 1033-residue polypeptide: Kinesin-like protein KIN-4A (1033 aa).

In terms of domain architecture, Kinesin motor spans 11 to 366 (CVKVAVHVRP…LKYANRARNI (356 aa)). 89-96 (GQTGSGKT) contributes to the ATP binding site. The segment at 443 to 462 (QDGSPCSVESDGLKRNLRSR) is disordered. The span at 453 to 462 (DGLKRNLRSR) shows a compositional bias: basic and acidic residues. A coiled-coil region spans residues 525–638 (ALKQHFGKKI…IKQEAEQFRQ (114 aa)). The interval 763–785 (DELDSKGPSPSRGKNGCARGSSL) is disordered. Residues 863-895 (IEIREMKEQLKELVGLLRQSELQRKEVENELKL) are a coiled coil.

It belongs to the TRAFAC class myosin-kinesin ATPase superfamily. Kinesin family. KIN-4 subfamily. In terms of assembly, homodimer. In terms of tissue distribution, expressed in cotton fibers.

It localises to the cytoplasm. Its function is as follows. Kinesin-like motor protein involved in the control of the oriented deposition of cellulose microfibrils. This chain is Kinesin-like protein KIN-4A, found in Gossypium hirsutum (Upland cotton).